A 156-amino-acid polypeptide reads, in one-letter code: Ribosomal RNA large subunit methyltransferase H (156 aa).

S-adenosyl-L-methionine-binding positions include leucine 73, glycine 104, and 123-128; that span reads LSPLTL.

This sequence belongs to the RNA methyltransferase RlmH family. In terms of assembly, homodimer.

The protein localises to the cytoplasm. The catalysed reaction is pseudouridine(1915) in 23S rRNA + S-adenosyl-L-methionine = N(3)-methylpseudouridine(1915) in 23S rRNA + S-adenosyl-L-homocysteine + H(+). In terms of biological role, specifically methylates the pseudouridine at position 1915 (m3Psi1915) in 23S rRNA. In Aliivibrio fischeri (strain ATCC 700601 / ES114) (Vibrio fischeri), this protein is Ribosomal RNA large subunit methyltransferase H.